We begin with the raw amino-acid sequence, 232 residues long: Ubiquinone biosynthesis O-methyltransferase (232 aa).

Arg-36, Gly-55, Asp-76, and Leu-120 together coordinate S-adenosyl-L-methionine.

It belongs to the methyltransferase superfamily. UbiG/COQ3 family.

It carries out the reaction a 3-demethylubiquinol + S-adenosyl-L-methionine = a ubiquinol + S-adenosyl-L-homocysteine + H(+). The catalysed reaction is a 3-(all-trans-polyprenyl)benzene-1,2-diol + S-adenosyl-L-methionine = a 2-methoxy-6-(all-trans-polyprenyl)phenol + S-adenosyl-L-homocysteine + H(+). It functions in the pathway cofactor biosynthesis; ubiquinone biosynthesis. Functionally, O-methyltransferase that catalyzes the 2 O-methylation steps in the ubiquinone biosynthetic pathway. The polypeptide is Ubiquinone biosynthesis O-methyltransferase (Pseudomonas putida (strain GB-1)).